Here is a 56-residue protein sequence, read N- to C-terminus: Large ribosomal subunit protein bL32c (56 aa).

The span at 1-20 (MAAPKKRTSKSRKNMRKSTW) shows a compositional bias: basic residues. A disordered region spans residues 1 to 28 (MAAPKKRTSKSRKNMRKSTWKRQAATQA).

It belongs to the bacterial ribosomal protein bL32 family.

It localises to the plastid. Its subcellular location is the chloroplast. This Mesostigma viride (Green alga) protein is Large ribosomal subunit protein bL32c (rpl32).